Here is a 417-residue protein sequence, read N- to C-terminus: Gamma-glutamyl phosphate reductase (417 aa).

It belongs to the gamma-glutamyl phosphate reductase family.

It localises to the cytoplasm. The enzyme catalyses L-glutamate 5-semialdehyde + phosphate + NADP(+) = L-glutamyl 5-phosphate + NADPH + H(+). It participates in amino-acid biosynthesis; L-proline biosynthesis; L-glutamate 5-semialdehyde from L-glutamate: step 2/2. In terms of biological role, catalyzes the NADPH-dependent reduction of L-glutamate 5-phosphate into L-glutamate 5-semialdehyde and phosphate. The product spontaneously undergoes cyclization to form 1-pyrroline-5-carboxylate. This is Gamma-glutamyl phosphate reductase from Heliobacterium modesticaldum (strain ATCC 51547 / Ice1).